The chain runs to 1155 residues: DNA-directed RNA polymerase subunit beta (1155 aa).

It belongs to the RNA polymerase beta chain family. The RNAP catalytic core consists of 2 alpha, 1 beta, 1 beta' and 1 omega subunit. When a sigma factor is associated with the core the holoenzyme is formed, which can initiate transcription.

The enzyme catalyses RNA(n) + a ribonucleoside 5'-triphosphate = RNA(n+1) + diphosphate. Functionally, DNA-dependent RNA polymerase catalyzes the transcription of DNA into RNA using the four ribonucleoside triphosphates as substrates. The polypeptide is DNA-directed RNA polymerase subunit beta (Borrelia duttonii (strain Ly)).